A 515-amino-acid chain; its full sequence is N-fatty-acyl-amino acid synthase/hydrolase PM20D1.1 (515 aa).

The N-terminal stretch at 1–34 (MKTKFTKKTVLKFFGILFAILLLSVLILFSVVIG) is a signal peptide. N-linked (GlcNAc...) asparagine glycosylation is found at Asn-50, Asn-87, and Asn-118. Residue His-140 coordinates Zn(2+). Asp-142 is a catalytic residue. Residue Asp-173 coordinates Zn(2+). Residue Glu-207 is the Proton acceptor of the active site. Residues Glu-208, Asp-234, and His-480 each contribute to the Zn(2+) site.

This sequence belongs to the peptidase M20A family. The cofactor is Zn(2+).

The protein localises to the secreted. The enzyme catalyses an N-acyl-L-amino acid + H2O = an L-alpha-amino acid + a carboxylate. It catalyses the reaction an N-acyl-aromatic L-alpha-amino acid + H2O = an aromatic L-alpha-amino acid + a carboxylate. It carries out the reaction N-(5Z,8Z,11Z,14Z)-eicosatetraenoyl-glycine + H2O = (5Z,8Z,11Z,14Z)-eicosatetraenoate + glycine. The catalysed reaction is N-hexadecanoyl-L-phenylalanine + H2O = hexadecanoate + L-phenylalanine. The enzyme catalyses N-octadecanoyl-L-phenylalanine + H2O = octadecanoate + L-phenylalanine. It catalyses the reaction N-(4Z,7Z,10Z,13Z,16Z,19Z-docosahexaenoyl)-L-phenylalanine + H2O = (4Z,7Z,10Z,13Z,16Z,19Z)-docosahexaenoate + L-phenylalanine. It carries out the reaction N-(9Z-octadecenoyl)-L-asparagine + H2O = L-asparagine + (9Z)-octadecenoate. The catalysed reaction is (9Z)-octadecenoate + glycine = N-(9Z-octadecenoyl)glycine + H2O. The enzyme catalyses N-(9Z-octadecenoyl)-L-lysine + H2O = L-lysine + (9Z)-octadecenoate. It catalyses the reaction N-(9Z-octadecenoyl)-L-methionine + H2O = (9Z)-octadecenoate + L-methionine. It carries out the reaction N-(9Z-octadecenoyl)-L-serine + H2O = L-serine + (9Z)-octadecenoate. The catalysed reaction is N-(9Z-octadecenoyl)-L-tryptophan + H2O = L-tryptophan + (9Z)-octadecenoate. The enzyme catalyses N-(9Z-octadecenoyl)-L-tyrosine + H2O = L-tyrosine + (9Z)-octadecenoate. It catalyses the reaction N-(9Z-octadecenoyl)-L-glutamine + H2O = L-glutamine + (9Z)-octadecenoate. It carries out the reaction N-(5Z,8Z,11Z,14Z-eicosatetraenoyl)-L-serine + H2O = (5Z,8Z,11Z,14Z)-eicosatetraenoate + L-serine. The catalysed reaction is (5Z,8Z,11Z,14Z)-eicosatetraenoate + L-phenylalanine = N-(5Z,8Z,11Z,14Z-eicosatetraenoyl)-L-phenylalanine + H2O. The enzyme catalyses N-(9Z-octadecenoyl)-L-leucine + H2O = L-leucine + (9Z)-octadecenoate. It catalyses the reaction L-phenylalanine + (9Z)-octadecenoate = N-(9Z-octadecenoyl)-L-phenylalanine + H2O. It participates in amino-acid metabolism. It functions in the pathway energy metabolism; electron transfer. Its pathway is lipid metabolism; fatty acid metabolism. Lipoproteins are powerful coactivators of PM20D1 activity in vitro and NAA biosynthesis in vivo. Functionally, secreted enzyme that regulates the endogenous N-fatty acyl amino acid (NAAs) tissue and circulating levels by functioning as a bidirectional NAA synthase/hydrolase. It condenses free fatty acids and free amino acids to generate NAAs and bidirectionally catalyzes the reverse hydrolysis reaction. Some of these NAAs stimulate oxidative metabolism via mitochondrial uncoupling, increasing energy expenditure in a UPC1-independent manner. Thereby, this secreted protein may indirectly regulate whole body energy expenditure. PM20D1 circulates in tight association with both low- and high-density (LDL and HDL,respectively) lipoprotein particles. The protein is N-fatty-acyl-amino acid synthase/hydrolase PM20D1.1 of Danio rerio (Zebrafish).